The sequence spans 312 residues: UDP-N-acetylenolpyruvoylglucosamine reductase (312 aa).

The FAD-binding PCMH-type domain maps to 33 to 199 (RVGGKAEWYC…TGATLQLLPG (167 aa)). The active site involves R178. The active-site Proton donor is the S229. E299 is an active-site residue.

This sequence belongs to the MurB family. FAD is required as a cofactor.

The protein resides in the cytoplasm. The catalysed reaction is UDP-N-acetyl-alpha-D-muramate + NADP(+) = UDP-N-acetyl-3-O-(1-carboxyvinyl)-alpha-D-glucosamine + NADPH + H(+). It participates in cell wall biogenesis; peptidoglycan biosynthesis. Cell wall formation. The protein is UDP-N-acetylenolpyruvoylglucosamine reductase of Synechococcus sp. (strain JA-3-3Ab) (Cyanobacteria bacterium Yellowstone A-Prime).